A 96-amino-acid polypeptide reads, in one-letter code: uncharacterized protein (96 aa).

This is an uncharacterized protein from Invertebrate iridescent virus 6 (IIV-6).